We begin with the raw amino-acid sequence, 496 residues long: Putative aldehyde dehydrogenase-like protein C922.07c (496 aa).

241 to 246 (GSTKVG) is an NAD(+) binding site. E263 serves as the catalytic Proton acceptor. The Nucleophile role is filled by C297.

This sequence belongs to the aldehyde dehydrogenase family.

It is found in the cytoplasm. The protein localises to the nucleus. The sequence is that of Putative aldehyde dehydrogenase-like protein C922.07c from Schizosaccharomyces pombe (strain 972 / ATCC 24843) (Fission yeast).